The chain runs to 374 residues: Autophagy-related protein 18e (374 aa).

WD repeat units follow at residues 28–66 (KSDL…KKSI), 72–117 (ESGF…CLSE), 202–242 (AHDS…LLQE), and 247–286 (VERA…LSFD).

Belongs to the WD repeat PROPPIN family. Component of the PI(3,5)P2 regulatory complex at least composed of ATG18, SAC/FIG4, FAB1 and VAC14.

It is found in the preautophagosomal structure membrane. The protein resides in the vacuole membrane. The PI(3,5)P2 regulatory complex regulates both the synthesis and turnover of phosphatidylinositol 3,5-bisphosphate (PtdIns(3,5)P2). Required for autophagy. The protein is Autophagy-related protein 18e (ATG18E) of Arabidopsis thaliana (Mouse-ear cress).